Here is a 462-residue protein sequence, read N- to C-terminus: UDP-N-acetylmuramoylalanine--D-glutamate ligase (462 aa).

Position 125–131 (125–131 (GSDGKTT)) interacts with ATP.

The protein belongs to the MurCDEF family.

The protein localises to the cytoplasm. It carries out the reaction UDP-N-acetyl-alpha-D-muramoyl-L-alanine + D-glutamate + ATP = UDP-N-acetyl-alpha-D-muramoyl-L-alanyl-D-glutamate + ADP + phosphate + H(+). The protein operates within cell wall biogenesis; peptidoglycan biosynthesis. In terms of biological role, cell wall formation. Catalyzes the addition of glutamate to the nucleotide precursor UDP-N-acetylmuramoyl-L-alanine (UMA). The chain is UDP-N-acetylmuramoylalanine--D-glutamate ligase from Clostridium acetobutylicum (strain ATCC 824 / DSM 792 / JCM 1419 / IAM 19013 / LMG 5710 / NBRC 13948 / NRRL B-527 / VKM B-1787 / 2291 / W).